A 412-amino-acid polypeptide reads, in one-letter code: Methylmalonic aciduria type A homolog, mitochondrial (412 aa).

The N-terminal 15 residues, 1–15, are a transit peptide targeting the mitochondrion; that stretch reads MVVRALVRAHPLSRI. GTP-binding positions include 132–140, Asp275, and 311–313; these read GSPGVGKSS and SIM.

It belongs to the SIMIBI class G3E GTPase family. ArgK/MeaB subfamily.

Its subcellular location is the mitochondrion. Its function is as follows. May have GTPase activity. May also bind and hydrolyze ATP. May function as chaperone. Likely to have a role in propionyl-CoA metabolism and adenosylcobalamin synthesis. The protein is Methylmalonic aciduria type A homolog, mitochondrial of Caenorhabditis briggsae.